Reading from the N-terminus, the 288-residue chain is Acetyl-coenzyme A carboxylase carboxyl transferase subunit beta (288 aa).

The 256-residue stretch at 33–288 (LFSQCPGCKH…LVRLHGGSPR (256 aa)) folds into the CoA carboxyltransferase N-terminal domain. The Zn(2+) site is built by Cys37, Cys40, Cys55, and Cys58. The C4-type zinc finger occupies 37–58 (CPGCKHTIYQKDLGSERICPHC).

It belongs to the AccD/PCCB family. In terms of assembly, acetyl-CoA carboxylase is a heterohexamer composed of biotin carboxyl carrier protein (AccB), biotin carboxylase (AccC) and two subunits each of ACCase subunit alpha (AccA) and ACCase subunit beta (AccD). Requires Zn(2+) as cofactor.

Its subcellular location is the cytoplasm. It carries out the reaction N(6)-carboxybiotinyl-L-lysyl-[protein] + acetyl-CoA = N(6)-biotinyl-L-lysyl-[protein] + malonyl-CoA. It functions in the pathway lipid metabolism; malonyl-CoA biosynthesis; malonyl-CoA from acetyl-CoA: step 1/1. Functionally, component of the acetyl coenzyme A carboxylase (ACC) complex. Biotin carboxylase (BC) catalyzes the carboxylation of biotin on its carrier protein (BCCP) and then the CO(2) group is transferred by the transcarboxylase to acetyl-CoA to form malonyl-CoA. The polypeptide is Acetyl-coenzyme A carboxylase carboxyl transferase subunit beta (Streptococcus pneumoniae serotype 4 (strain ATCC BAA-334 / TIGR4)).